The chain runs to 50 residues: Omega-conotoxin Bu8 (50 aa).

Residue alanine 1 is a signal peptide. A propeptide spanning residues 2–24 (EDSRGTQLHRALRKATKLSESTR) is cleaved from the precursor. 3 disulfide bridges follow: cysteine 25–cysteine 40, cysteine 32–cysteine 44, and cysteine 39–cysteine 49. Cysteine 49 is subject to Cysteine amide.

It belongs to the conotoxin O1 superfamily. As to expression, expressed by the venom duct.

The protein localises to the secreted. In terms of biological role, omega-conotoxins act at presynaptic membranes, they bind and block voltage-gated calcium channels (Cav). This toxin selectively and potently inhibits depolarization-activated rat Cav2.2/CACNA1B currents (IC(50)=89 nM), when coexpressed with alpha-2/delta-1 (CACNA2D1) and beta-3 (CACNB3) subunits. In vivo, is lethal to fish and displays potent analgesic activity in mice pain models of hot plate and acetic acid writhing but has fewer side effects on mouse motor function and lower toxicity in goldfish. Shows higher or similar analgesic activity in the pain models mentioned above compared to MVIIA, and lower side effects. In addition, it blocks Cav2.2/CACNA1B more rapidly than MVIIA and also dissociates more rapidly. In Conus bullatus (Bubble cone), this protein is Omega-conotoxin Bu8.